The chain runs to 545 residues: Capsular polysaccharide phosphotransferase SacB (545 aa).

It belongs to the stealth family.

May be the polymerase that links individual UDP-N-acetyl-D-mannosamine monomers. In serotype A the capsule is composed of repeated units of (alpha 1-6)-linked N-acetyl-D-mannosamine-1-phosphate. This Neisseria meningitidis serogroup A protein is Capsular polysaccharide phosphotransferase SacB (sacB).